The primary structure comprises 283 residues: Protein/nucleic acid deglycase HchA (283 aa).

Zn(2+)-binding residues include H86, E91, and H123. The active-site Nucleophile is C185.

The protein belongs to the peptidase C56 family. HchA subfamily. In terms of assembly, homodimer.

Its subcellular location is the cytoplasm. It catalyses the reaction N(omega)-(1-hydroxy-2-oxopropyl)-L-arginyl-[protein] + H2O = lactate + L-arginyl-[protein] + H(+). The enzyme catalyses N(6)-(1-hydroxy-2-oxopropyl)-L-lysyl-[protein] + H2O = lactate + L-lysyl-[protein] + H(+). It carries out the reaction S-(1-hydroxy-2-oxopropyl)-L-cysteinyl-[protein] + H2O = lactate + L-cysteinyl-[protein] + H(+). The catalysed reaction is N(omega)-(1-hydroxy-2-oxoethyl)-L-arginyl-[protein] + H2O = L-arginyl-[protein] + glycolate + H(+). It catalyses the reaction N(6)-(1-hydroxy-2-oxoethyl)-L-lysyl-[protein] + H2O = glycolate + L-lysyl-[protein] + H(+). The enzyme catalyses S-(1-hydroxy-2-oxoethyl)-L-cysteinyl-[protein] + H2O = glycolate + L-cysteinyl-[protein] + H(+). It carries out the reaction N(2)-(1-hydroxy-2-oxopropyl)-dGTP + H2O = lactate + dGTP + H(+). The catalysed reaction is N(2)-(1-hydroxy-2-oxopropyl)-GTP + H2O = lactate + GTP + H(+). It catalyses the reaction N(2)-(1-hydroxy-2-oxopropyl)-GDP + H2O = lactate + GDP + H(+). The enzyme catalyses N(2)-(1-hydroxy-2-oxopropyl)-GMP + H2O = lactate + GMP + H(+). It carries out the reaction N(2)-(1-hydroxy-2-oxoethyl)-dGTP + H2O = dGTP + glycolate + H(+). The catalysed reaction is N(2)-(1-hydroxy-2-oxoethyl)-GTP + H2O = glycolate + GTP + H(+). It catalyses the reaction N(2)-(1-hydroxy-2-oxoethyl)-GDP + H2O = glycolate + GDP + H(+). The enzyme catalyses N(2)-(1-hydroxy-2-oxoethyl)-GMP + H2O = glycolate + GMP + H(+). It carries out the reaction an N(2)-(1-hydroxy-2-oxopropyl)-guanosine in RNA + H2O = a guanosine in RNA + lactate + H(+). The catalysed reaction is an N(2)-(1-hydroxy-2-oxopropyl)-2'-deoxyguanosine in DNA + H2O = a 2'-deoxyguanosine in DNA + lactate + H(+). It catalyses the reaction an N(2)-(1-hydroxy-2-oxoethyl)-guanosine in RNA + H2O = a guanosine in RNA + glycolate + H(+). The enzyme catalyses an N(2)-(1-hydroxy-2-oxoethyl)-2'-deoxyguanosine in DNA + H2O = a 2'-deoxyguanosine in DNA + glycolate + H(+). Protein and nucleotide deglycase that catalyzes the deglycation of the Maillard adducts formed between amino groups of proteins or nucleotides and reactive carbonyl groups of glyoxals. Thus, functions as a protein deglycase that repairs methylglyoxal- and glyoxal-glycated proteins, and releases repaired proteins and lactate or glycolate, respectively. Deglycates cysteine, arginine and lysine residues in proteins, and thus reactivates these proteins by reversing glycation by glyoxals. Acts on early glycation intermediates (hemithioacetals and aminocarbinols), preventing the formation of Schiff bases and advanced glycation endproducts (AGE). Also functions as a nucleotide deglycase able to repair glycated guanine in the free nucleotide pool (GTP, GDP, GMP, dGTP) and in DNA and RNA. Is thus involved in a major nucleotide repair system named guanine glycation repair (GG repair), dedicated to reversing methylglyoxal and glyoxal damage via nucleotide sanitization and direct nucleic acid repair. Plays an important role in protecting cells from carbonyl stress. The protein is Protein/nucleic acid deglycase HchA of Escherichia coli (strain 55989 / EAEC).